A 200-amino-acid polypeptide reads, in one-letter code: ATP synthase subunit delta', mitochondrial (200 aa).

The N-terminal 21 residues, 1 to 21, are a transit peptide targeting the mitochondrion; it reads MFRHSSRLLARATTMGWRRPF.

Belongs to the ATPase epsilon chain family. In terms of assembly, F-type ATPases have 2 components, CF(1) - the catalytic core - and CF(0) - the membrane proton channel. CF(1) has five subunits: alpha(3), beta(3), gamma(1), delta(1), epsilon(1). CF(0) has three main subunits: a, b and c.

Its subcellular location is the mitochondrion. The protein localises to the mitochondrion inner membrane. Its function is as follows. Mitochondrial membrane ATP synthase (F(1)F(0) ATP synthase or Complex V) produces ATP from ADP in the presence of a proton gradient across the membrane which is generated by electron transport complexes of the respiratory chain. F-type ATPases consist of two structural domains, F(1) - containing the extramembraneous catalytic core, and F(0) - containing the membrane proton channel, linked together by a central stalk and a peripheral stalk. During catalysis, ATP turnover in the catalytic domain of F(1) is coupled via a rotary mechanism of the central stalk subunits to proton translocation. Part of the complex F(1) domain and of the central stalk which is part of the complex rotary element. Rotation of the central stalk against the surrounding alpha(3)beta(3) subunits leads to hydrolysis of ATP in three separate catalytic sites on the beta subunits. The polypeptide is ATP synthase subunit delta', mitochondrial (Ipomoea batatas (Sweet potato)).